A 667-amino-acid polypeptide reads, in one-letter code: DNA ligase (667 aa).

NAD(+)-binding positions include 34–38, 83–84, and glutamate 117; these read DYEFD and SL. The N6-AMP-lysine intermediate role is filled by lysine 119. Arginine 140, glutamate 176, lysine 289, and lysine 313 together coordinate NAD(+). 4 residues coordinate Zn(2+): cysteine 407, cysteine 410, cysteine 425, and cysteine 431. Residues 591–667 form the BRCT domain; the sequence is QVNRNFEGMS…ISEDEFMGMM (77 aa).

The protein belongs to the NAD-dependent DNA ligase family. LigA subfamily. The cofactor is Mg(2+). Mn(2+) serves as cofactor.

The enzyme catalyses NAD(+) + (deoxyribonucleotide)n-3'-hydroxyl + 5'-phospho-(deoxyribonucleotide)m = (deoxyribonucleotide)n+m + AMP + beta-nicotinamide D-nucleotide.. Functionally, DNA ligase that catalyzes the formation of phosphodiester linkages between 5'-phosphoryl and 3'-hydroxyl groups in double-stranded DNA using NAD as a coenzyme and as the energy source for the reaction. It is essential for DNA replication and repair of damaged DNA. This is DNA ligase from Chlorobium chlorochromatii (strain CaD3).